We begin with the raw amino-acid sequence, 339 residues long: MTEYTPKERLYRALRKQPVDRMPAVCFTQTGTVEQMEASGAFWPEAHADAEKMAKLAEAGHTVIGFEAVRVPFDITAEAELFGCGIKAGDLKQQPSVIKHSVKNLEDLDKIKNYSLDTGRIGTILKAVKILSEKYGKELPVIGSMIGPFSLAQHINGDAWFGNLFTGEDIVPALLDFCADFNIAYAKAMVENGADTIAIIDPTASYELIGGEFYEKYALPYQKKIVDAMKELDVATVLHICGNTTNGLAIMDRTGVNAISVDQRVDIKTATGNVENAIIVGNLDPVAVLWNGTPEDVEAASKKVLDAGVGILTVGCGIVSMTPSANLQKMVECAKNYRY.

Zn(2+)-binding residues include His-239, Cys-241, and Cys-316.

It belongs to the uroporphyrinogen decarboxylase family. MtbA/MtaA subfamily. The cofactor is Zn(2+).

It catalyses the reaction methyl-Co(III)-[methylamine-specific corrinoid protein] + coenzyme M = Co(I)-[methylamine-specific corrinoid protein] + methyl-coenzyme M + H(+). It participates in one-carbon metabolism; methanogenesis from methylated amine. Methyltransferase involved in methanogenesis from methylamines methanol pathway. Catalyzes the transfer of the methyl group from the methylated corrinoid protein MtmC (MtmC1 or MtmC2) to coenzyme M, forming the substrate for coenzyme-B sulfoethylthiotransferase. The protein is Methylcobamide:CoM methyltransferase MtbA (mtbA) of Methanosarcina mazei (strain ATCC BAA-159 / DSM 3647 / Goe1 / Go1 / JCM 11833 / OCM 88) (Methanosarcina frisia).